We begin with the raw amino-acid sequence, 414 residues long: Serine hydroxymethyltransferase (414 aa).

(6S)-5,6,7,8-tetrahydrofolate is bound by residues Leu-118 and 122–124 (GHL). Lys-227 is subject to N6-(pyridoxal phosphate)lysine. (6S)-5,6,7,8-tetrahydrofolate contacts are provided by residues Glu-240 and 350 to 352 (SPF).

This sequence belongs to the SHMT family. Homodimer. Pyridoxal 5'-phosphate serves as cofactor.

The protein resides in the cytoplasm. It carries out the reaction (6R)-5,10-methylene-5,6,7,8-tetrahydrofolate + glycine + H2O = (6S)-5,6,7,8-tetrahydrofolate + L-serine. Its pathway is one-carbon metabolism; tetrahydrofolate interconversion. It participates in amino-acid biosynthesis; glycine biosynthesis; glycine from L-serine: step 1/1. Its function is as follows. Catalyzes the reversible interconversion of serine and glycine with tetrahydrofolate (THF) serving as the one-carbon carrier. This reaction serves as the major source of one-carbon groups required for the biosynthesis of purines, thymidylate, methionine, and other important biomolecules. Also exhibits THF-independent aldolase activity toward beta-hydroxyamino acids, producing glycine and aldehydes, via a retro-aldol mechanism. The sequence is that of Serine hydroxymethyltransferase from Bacillus thuringiensis (strain Al Hakam).